The chain runs to 106 residues: MPRFTIHDLAETIDARAAAGGEGSYTRKLLDKGAEHCAKKFGEEAVETVIAAVENDRAHLIAEGADLLYHFLVLLKARGIKLEEVEAALGKRTSMSGLEEKASRKE.

Belongs to the PRA-PH family.

The protein localises to the cytoplasm. It catalyses the reaction 1-(5-phospho-beta-D-ribosyl)-ATP + H2O = 1-(5-phospho-beta-D-ribosyl)-5'-AMP + diphosphate + H(+). It participates in amino-acid biosynthesis; L-histidine biosynthesis; L-histidine from 5-phospho-alpha-D-ribose 1-diphosphate: step 2/9. The polypeptide is Phosphoribosyl-ATP pyrophosphatase 1 (hisE1) (Bradyrhizobium diazoefficiens (strain JCM 10833 / BCRC 13528 / IAM 13628 / NBRC 14792 / USDA 110)).